Here is a 319-residue protein sequence, read N- to C-terminus: Thioredoxin reductase (319 aa).

37 to 44 contacts FAD; the sequence is ERGVPGGQ. A disulfide bond links Cys-136 and Cys-139. 279 to 288 contributes to the FAD binding site; that stretch reads DVRAKSLRQI.

This sequence belongs to the class-II pyridine nucleotide-disulfide oxidoreductase family. As to quaternary structure, homodimer. It depends on FAD as a cofactor.

The protein localises to the cytoplasm. The catalysed reaction is [thioredoxin]-dithiol + NADP(+) = [thioredoxin]-disulfide + NADPH + H(+). The chain is Thioredoxin reductase (trxB) from Listeria monocytogenes serovar 1/2a (strain ATCC BAA-679 / EGD-e).